Consider the following 440-residue polypeptide: UDP-N-acetylmuramoylalanine--D-glutamate ligase (440 aa).

G113–T119 contributes to the ATP binding site.

It belongs to the MurCDEF family.

Its subcellular location is the cytoplasm. It carries out the reaction UDP-N-acetyl-alpha-D-muramoyl-L-alanine + D-glutamate + ATP = UDP-N-acetyl-alpha-D-muramoyl-L-alanyl-D-glutamate + ADP + phosphate + H(+). The protein operates within cell wall biogenesis; peptidoglycan biosynthesis. Cell wall formation. Catalyzes the addition of glutamate to the nucleotide precursor UDP-N-acetylmuramoyl-L-alanine (UMA). The protein is UDP-N-acetylmuramoylalanine--D-glutamate ligase of Buchnera aphidicola subsp. Acyrthosiphon pisum (strain Tuc7).